The chain runs to 392 residues: Chorismate synthase (392 aa).

Residues Arg39 and Arg45 each coordinate NADP(+). FMN contacts are provided by residues 131 to 133 (RSS), 255 to 256 (NA), Gly300, 315 to 319 (KPIPT), and Arg341.

The protein belongs to the chorismate synthase family. Homotetramer. The cofactor is FMNH2.

The enzyme catalyses 5-O-(1-carboxyvinyl)-3-phosphoshikimate = chorismate + phosphate. Its pathway is metabolic intermediate biosynthesis; chorismate biosynthesis; chorismate from D-erythrose 4-phosphate and phosphoenolpyruvate: step 7/7. Its function is as follows. Catalyzes the anti-1,4-elimination of the C-3 phosphate and the C-6 proR hydrogen from 5-enolpyruvylshikimate-3-phosphate (EPSP) to yield chorismate, which is the branch point compound that serves as the starting substrate for the three terminal pathways of aromatic amino acid biosynthesis. This reaction introduces a second double bond into the aromatic ring system. The sequence is that of Chorismate synthase from Leuconostoc mesenteroides subsp. mesenteroides (strain ATCC 8293 / DSM 20343 / BCRC 11652 / CCM 1803 / JCM 6124 / NCDO 523 / NBRC 100496 / NCIMB 8023 / NCTC 12954 / NRRL B-1118 / 37Y).